A 305-amino-acid polypeptide reads, in one-letter code: uncharacterized protein (305 aa).

The tract at residues 255–305 is disordered; that stretch reads RCHRAGLRSPPRTREPLWSLGPSGGEAAGEAPGGKGPPTPVLPHARRAGAA. Gly residues predominate over residues 276-288; the sequence is PSGGEAAGEAPGG.

This is an uncharacterized protein from Streptomyces fradiae (Streptomyces roseoflavus).